Consider the following 92-residue polypeptide: Small ribosomal subunit protein uS19 (92 aa).

Belongs to the universal ribosomal protein uS19 family.

Its function is as follows. Protein S19 forms a complex with S13 that binds strongly to the 16S ribosomal RNA. This is Small ribosomal subunit protein uS19 from Corynebacterium jeikeium (strain K411).